The following is a 362-amino-acid chain: 3-dehydroquinate synthase (362 aa).

Residues 74–79 (DGEGYK), 108–112 (GVIGD), 132–133 (TT), K145, K154, and 172–175 (TLDT) each bind NAD(+). 3 residues coordinate Zn(2+): E187, H250, and H267.

The protein belongs to the sugar phosphate cyclases superfamily. Dehydroquinate synthase family. Co(2+) is required as a cofactor. Zn(2+) serves as cofactor. The cofactor is NAD(+).

Its subcellular location is the cytoplasm. It catalyses the reaction 7-phospho-2-dehydro-3-deoxy-D-arabino-heptonate = 3-dehydroquinate + phosphate. The protein operates within metabolic intermediate biosynthesis; chorismate biosynthesis; chorismate from D-erythrose 4-phosphate and phosphoenolpyruvate: step 2/7. In terms of biological role, catalyzes the conversion of 3-deoxy-D-arabino-heptulosonate 7-phosphate (DAHP) to dehydroquinate (DHQ). The chain is 3-dehydroquinate synthase from Citrifermentans bemidjiense (strain ATCC BAA-1014 / DSM 16622 / JCM 12645 / Bem) (Geobacter bemidjiensis).